A 185-amino-acid chain; its full sequence is Elongation factor P (185 aa).

This sequence belongs to the elongation factor P family.

It localises to the cytoplasm. The protein operates within protein biosynthesis; polypeptide chain elongation. In terms of biological role, involved in peptide bond synthesis. Stimulates efficient translation and peptide-bond synthesis on native or reconstituted 70S ribosomes in vitro. Probably functions indirectly by altering the affinity of the ribosome for aminoacyl-tRNA, thus increasing their reactivity as acceptors for peptidyl transferase. The sequence is that of Elongation factor P from Streptococcus pyogenes serotype M28 (strain MGAS6180).